Consider the following 504-residue polypeptide: Plasma protease C1 inhibitor (504 aa).

The N-terminal stretch at 1-22 is a signal peptide; it reads MASRLTPLTLLLLLLAGDRAFS. A disordered region spans residues 22–67; the sequence is SDPEATSHSTQDPLEAQAKSRESFPERDDSWSPPEPTVLPSTWPTT. The segment covering 39–51 has biased composition (basic and acidic residues); the sequence is AKSRESFPERDDS. Asn-75, Asn-83, and Asn-107 each carry an N-linked (GlcNAc...) asparagine glycan. Residues 85–124 are compositionally biased toward polar residues; sequence SFSQHSQPAAQLPTDSPGQPPLNSSSQPSTASDLPTQATT. A disordered region spans residues 85–141; it reads SFSQHSQPAAQLPTDSPGQPPLNSSSQPSTASDLPTQATTEPFCPEPLAQCSDSDRD. 2 cysteine pairs are disulfide-bonded: Cys-128–Cys-432 and Cys-135–Cys-210. N-linked (GlcNAc...) asparagine glycans are attached at residues Asn-243 and Asn-356.

Belongs to the serpin family. Interacts with MASP1.

It is found in the secreted. Its function is as follows. Serine protease inhibitor, which acrs as a regulator of the classical complement pathway. Forms a proteolytically inactive stoichiometric complex with the C1r or C1s proteases. May also regulate blood coagulation, fibrinolysis and the generation of kinins. Very efficient inhibitor of FXIIa. Inhibits chymotrypsin and kallikrein. The protein is Plasma protease C1 inhibitor (Serping1) of Mus musculus (Mouse).